Here is a 288-residue protein sequence, read N- to C-terminus: ATP synthase subunit a (288 aa).

Transmembrane regions (helical) follow at residues 47–67, 104–124, 157–177, 199–219, 237–257, and 258–278; these read LDSMLWSIGLGIVFCALFWLV, LIAPLALTIFVWIFLMNLMDL, DPNITLGMSFSVFALIIYYSI, PIAKIILIPINFILEFVTLIA, LIFVLIALMPFWIQWALSVPW, and AIFHILIITLQAFVFMMLTIV.

The protein belongs to the ATPase A chain family. F-type ATPases have 2 components, CF(1) - the catalytic core - and CF(0) - the membrane proton channel. CF(1) has five subunits: alpha(3), beta(3), gamma(1), delta(1), epsilon(1). CF(0) has three main subunits: a(1), b(2) and c(9-12). The alpha and beta chains form an alternating ring which encloses part of the gamma chain. CF(1) is attached to CF(0) by a central stalk formed by the gamma and epsilon chains, while a peripheral stalk is formed by the delta and b chains.

The protein localises to the cell inner membrane. Key component of the proton channel; it plays a direct role in the translocation of protons across the membrane. The polypeptide is ATP synthase subunit a (Psychrobacter sp. (strain PRwf-1)).